Here is a 337-residue protein sequence, read N- to C-terminus: Phenylalanine--tRNA ligase alpha subunit (337 aa).

Residue glutamate 252 coordinates Mg(2+).

This sequence belongs to the class-II aminoacyl-tRNA synthetase family. Phe-tRNA synthetase alpha subunit type 1 subfamily. Tetramer of two alpha and two beta subunits. Requires Mg(2+) as cofactor.

It is found in the cytoplasm. It catalyses the reaction tRNA(Phe) + L-phenylalanine + ATP = L-phenylalanyl-tRNA(Phe) + AMP + diphosphate + H(+). The sequence is that of Phenylalanine--tRNA ligase alpha subunit from Francisella philomiragia subsp. philomiragia (strain ATCC 25017 / CCUG 19701 / FSC 153 / O#319-036).